Here is a 1510-residue protein sequence, read N- to C-terminus: Chromosome partition protein MukB (1510 aa).

Positions 6-30 (ELENEIELESDEVIMENENVEEIVD) form a coiled coil. 75–82 (GGNGAGKS) contacts ATP. 7 coiled-coil regions span residues 346 to 506 (QHRL…HKMS), 553 to 611 (QQTP…EDIS), 673 to 706 (MQSQ…RLSQ), 821 to 846 (SAAR…AQIA), 876 to 1064 (EALM…IQLQ), 1094 to 1149 (ERAR…RELV), and 1249 to 1304 (DAIE…LQNI). The tract at residues 707-824 (PDGSEDPRLN…EIPLFGSAAR (118 aa)) is flexible hinge.

It belongs to the SMC family. MukB subfamily. In terms of assembly, homodimerization via its hinge domain. Binds to DNA via its C-terminal region. Interacts, and probably forms a ternary complex, with MukE and MukF via its C-terminal region. The complex formation is stimulated by calcium or magnesium. Interacts with tubulin-related protein FtsZ.

The protein resides in the cytoplasm. It localises to the nucleoid. Plays a central role in chromosome condensation, segregation and cell cycle progression. Functions as a homodimer, which is essential for chromosome partition. Involved in negative DNA supercoiling in vivo, and by this means organize and compact chromosomes. May achieve or facilitate chromosome segregation by condensation DNA from both sides of a centrally located replisome during cell division. The polypeptide is Chromosome partition protein MukB (Haemophilus influenzae (strain PittGG)).